The chain runs to 470 residues: MNPNQKIITIGSISIAIGIISLMLQIGNIISIWASHSIQTGSQNHTGICNQRIITYENSTWVNHTYVNINNTNVVAGKDKTSVTLAGNSSLCSISGWAIYTKDNSIRIGSKGDVFVMREPFISCSHLECRTFFLTQGALLNDKHSNGTVKDRSPYRALMSCPLGEAPSPYNSKFESVAWSASACHDGMGWLTIGISGPDNGAVAVLKYNGIITETIKSWKKRILRTQESECVCVNGSCFTIMTDGPSNGAASYKIFKIEKGKVIKSIELNAPNSHYEECSCYPDTGTVMCVCRDNWHGSNRPWVSFNQNLDYQIGYICSGVFGDNPRPKDGEGSCNPVTVDGADGVKGFSYKYGNGVWIGRTKSNRLRKGFEMIWDPNGWTDTDSDFSVKQDVVAITDWSGYSGSFVQHPELTGLDCIRPCFWVELVRGRPRENTTIWTSGSSISFCGVNSDTANWSWPDGAELPFTIDK.

The Intravirion portion of the chain corresponds to 1–6 (MNPNQK). A helical transmembrane segment spans residues 7 to 27 (IITIGSISIAIGIISLMLQIG). The tract at residues 11-33 (GSISIAIGIISLMLQIGNIISIW) is involved in apical transport and lipid raft association. The Virion surface portion of the chain corresponds to 28-470 (NIISIWASHS…GAELPFTIDK (443 aa)). The tract at residues 36-90 (HSIQTGSQNHTGICNQRIITYENSTWVNHTYVNINNTNVVAGKDKTSVTLAGNSS) is hypervariable stalk region. 5 N-linked (GlcNAc...) asparagine; by host glycosylation sites follow: asparagine 44, asparagine 58, asparagine 63, asparagine 70, and asparagine 88. The interval 91 to 470 (LCSISGWAIY…GAELPFTIDK (380 aa)) is head of neuraminidase. 8 disulfides stabilise this stretch: cysteine 92/cysteine 417, cysteine 124/cysteine 129, cysteine 184/cysteine 231, cysteine 233/cysteine 238, cysteine 279/cysteine 292, cysteine 281/cysteine 290, cysteine 318/cysteine 335, and cysteine 421/cysteine 447. Arginine 118 provides a ligand contact to substrate. N-linked (GlcNAc...) asparagine; by host glycosylation is present at asparagine 146. Aspartate 151 acts as the Proton donor/acceptor in catalysis. Arginine 152 lines the substrate pocket. A glycan (N-linked (GlcNAc...) asparagine; by host) is linked at asparagine 235. 277–278 (EE) contacts substrate. Substrate is bound at residue arginine 293. Ca(2+) is bound by residues aspartate 294, glycine 298, and aspartate 324. Arginine 368 contacts substrate. Residue tyrosine 402 is the Nucleophile of the active site. N-linked (GlcNAc...) asparagine; by host glycans are attached at residues asparagine 434 and asparagine 455.

Belongs to the glycosyl hydrolase 34 family. In terms of assembly, homotetramer. Requires Ca(2+) as cofactor. In terms of processing, N-glycosylated.

The protein resides in the virion membrane. It localises to the host apical cell membrane. The catalysed reaction is Hydrolysis of alpha-(2-&gt;3)-, alpha-(2-&gt;6)-, alpha-(2-&gt;8)- glycosidic linkages of terminal sialic acid residues in oligosaccharides, glycoproteins, glycolipids, colominic acid and synthetic substrates.. With respect to regulation, inhibited by the neuraminidase inhibitors zanamivir (Relenza) and oseltamivir (Tamiflu). These drugs interfere with the release of progeny virus from infected cells and are effective against all influenza strains. Resistance to neuraminidase inhibitors is quite rare. In terms of biological role, catalyzes the removal of terminal sialic acid residues from viral and cellular glycoconjugates. Cleaves off the terminal sialic acids on the glycosylated HA during virus budding to facilitate virus release. Additionally helps virus spread through the circulation by further removing sialic acids from the cell surface. These cleavages prevent self-aggregation and ensure the efficient spread of the progeny virus from cell to cell. Otherwise, infection would be limited to one round of replication. Described as a receptor-destroying enzyme because it cleaves a terminal sialic acid from the cellular receptors. May facilitate viral invasion of the upper airways by cleaving the sialic acid moieties on the mucin of the airway epithelial cells. Likely to plays a role in the budding process through its association with lipid rafts during intracellular transport. May additionally display a raft-association independent effect on budding. Plays a role in the determination of host range restriction on replication and virulence. Sialidase activity in late endosome/lysosome traffic seems to enhance virus replication. The chain is Neuraminidase from Aves (Human).